Consider the following 333-residue polypeptide: tRNA(Ile)-lysidine synthase (333 aa).

ATP is bound at residue 33-38 (SGGADS).

It belongs to the tRNA(Ile)-lysidine synthase family.

It localises to the cytoplasm. It carries out the reaction cytidine(34) in tRNA(Ile2) + L-lysine + ATP = lysidine(34) in tRNA(Ile2) + AMP + diphosphate + H(+). Its function is as follows. Ligates lysine onto the cytidine present at position 34 of the AUA codon-specific tRNA(Ile) that contains the anticodon CAU, in an ATP-dependent manner. Cytidine is converted to lysidine, thus changing the amino acid specificity of the tRNA from methionine to isoleucine. The sequence is that of tRNA(Ile)-lysidine synthase from Salinispora tropica (strain ATCC BAA-916 / DSM 44818 / JCM 13857 / NBRC 105044 / CNB-440).